A 945-amino-acid polypeptide reads, in one-letter code: Kinesin-like protein KIN-7F (945 aa).

One can recognise a Kinesin motor domain in the interval 34–356 (RILVSVRLRP…LLFASCAKEV (323 aa)). 120–127 (GQTSSGKT) provides a ligand contact to ATP. A coiled-coil region spans residues 365 to 437 (VMSDKALVKQ…QDLLQVVGDN (73 aa)). Disordered stretches follow at residues 484-512 (RRVA…SVSS) and 553-588 (NECL…MNSR). 2 stretches are compositionally biased toward polar residues: residues 495 to 512 (QAEN…SVSS) and 560 to 587 (AVGS…SMNS).

It belongs to the TRAFAC class myosin-kinesin ATPase superfamily. Kinesin family. KIN-7 subfamily. As to quaternary structure, binds microtubules.

Its function is as follows. Binds ATP/ADP in vitro. Possesses low ATPase activity but high affinity for microtubules. The chain is Kinesin-like protein KIN-7F from Oryza sativa subsp. japonica (Rice).